A 271-amino-acid polypeptide reads, in one-letter code: Malonyl-[acyl-carrier protein] O-methyltransferase (271 aa).

This sequence belongs to the methyltransferase superfamily.

The catalysed reaction is malonyl-[ACP] + S-adenosyl-L-methionine = malonyl-[ACP] methyl ester + S-adenosyl-L-homocysteine. It participates in cofactor biosynthesis; biotin biosynthesis. Functionally, converts the free carboxyl group of a malonyl-thioester to its methyl ester by transfer of a methyl group from S-adenosyl-L-methionine (SAM). It allows to synthesize pimeloyl-ACP via the fatty acid synthetic pathway. The chain is Malonyl-[acyl-carrier protein] O-methyltransferase from Halalkalibacterium halodurans (strain ATCC BAA-125 / DSM 18197 / FERM 7344 / JCM 9153 / C-125) (Bacillus halodurans).